The sequence spans 565 residues: Thiol:disulfide interchange protein DsbD (565 aa).

The first 19 residues, 1–19 (MAQRIFTLILLLCSTSVFA), serve as a signal peptide directing secretion. 2 disulfides stabilise this stretch: cysteine 122–cysteine 128 and cysteine 182–cysteine 304. Helical transmembrane passes span 163–183 (LPFSALWALLIGIGIAFTPCV), 208–228 (LLTFIYVQGMALTYTALGLVV), 243–263 (YVLIGLAIVFTLLAMSMFGLF), 289–309 (GVFIMGAIAGLICSPCTTAPL), 323–343 (WLGGGTLYLYALGMGLPLMLI), 357–377 (WMEQVKTAFGFVILALPVFLL), and 384–404 (IWGLRLWSALGVAFFGWAFIT). Positions 434 to 565 (WAFGATHTAQ…FSAHLRDRQP (132 aa)) constitute a Thioredoxin domain. A disulfide bridge links cysteine 480 with cysteine 483.

It belongs to the thioredoxin family. DsbD subfamily.

The protein resides in the cell inner membrane. The catalysed reaction is [protein]-dithiol + NAD(+) = [protein]-disulfide + NADH + H(+). The enzyme catalyses [protein]-dithiol + NADP(+) = [protein]-disulfide + NADPH + H(+). In terms of biological role, required to facilitate the formation of correct disulfide bonds in some periplasmic proteins and for the assembly of the periplasmic c-type cytochromes. Acts by transferring electrons from cytoplasmic thioredoxin to the periplasm. This transfer involves a cascade of disulfide bond formation and reduction steps. The polypeptide is Thiol:disulfide interchange protein DsbD (Escherichia coli O6:H1 (strain CFT073 / ATCC 700928 / UPEC)).